The chain runs to 508 residues: MTRRRHGWQRPLHPLQIVGAVIYSVLVAAFYVFLGFFLGNRIAVIALLSVFSSVAVSVIVLFVRCTAIDPTDKTSAKKKRKDKSKGVLMKLRVKVVLSQVVVRFFRRLERKILRNFLRRTYLDPWKSSVQLEPLLPFPLVMKDDDSVTPDPKEEDDISYCSLCDLEVKRSSKHCRTCNRCVEGFDHHCRWLNNCVGKKNYTTFILLMVFVLLMLIIEGGTALAVFVRCFVDKKGMEMELKRRLYVEFPQWALATISIILVLFTAYGSAAMGQLFLFHVVLIRKGMRTYDYILAMKEENQFTEVDPFDELDSSSDESSDFDSPERLRPTFISKFMCRKANENQQRLSIKIEGDEQSPSSTLINKKPGFHVSINPWKLITLSSEKALQAAEKAKERLRKTKPVSGTEENSLKPLPLETKFGLLLDPDNNNTVLQPSTTAAVKLQVSPGRFSSPRRRFSGSSSSTVPSPKQKYRTNFDLKLTEVSRELESYISRQVLCSVIKQDGSEASPR.

Transmembrane regions (helical) follow at residues 17-37 (IVGAVIYSVLVAAFYVFLGFF) and 42-62 (IAVIALLSVFSSVAVSVIVLF). A DHHC domain is found at 158 to 208 (SYCSLCDLEVKRSSKHCRTCNRCVEGFDHHCRWLNNCVGKKNYTTFILLMV). Cysteine 188 serves as the catalytic S-palmitoyl cysteine intermediate. 2 helical membrane-spanning segments follow: residues 203–223 (FILLMVFVLLMLIIEGGTALA) and 250–270 (WALATISIILVLFTAYGSAAM). Positions 443 to 468 (VSPGRFSSPRRRFSGSSSSTVPSPKQ) are disordered. The segment covering 456-466 (SGSSSSTVPSP) has biased composition (low complexity).

This sequence belongs to the DHHC palmitoyltransferase family.

Its subcellular location is the endoplasmic reticulum membrane. The protein resides in the cytoplasmic vesicle membrane. The enzyme catalyses L-cysteinyl-[protein] + hexadecanoyl-CoA = S-hexadecanoyl-L-cysteinyl-[protein] + CoA. In terms of biological role, S-acyltransferase involved in protein lipid modification. This chain is Protein S-acyltransferase 18 (PAT18), found in Arabidopsis thaliana (Mouse-ear cress).